An 899-amino-acid polypeptide reads, in one-letter code: Translation initiation factor IF-2 (899 aa).

2 disordered regions span residues 31–227 (KKAE…ATEQ) and 240–310 (VTTS…GFDK). 2 stretches are compositionally biased toward polar residues: residues 36–47 (NVSQTEKQSLLS) and 73–87 (STLSVAGTGGKSKSV). 3 stretches are compositionally biased toward basic and acidic residues: residues 101-173 (SALE…EKAK), 181-219 (AKSETELLQLRREEEAKRKAEEDSQRQLEEARKMAETNE), and 247-261 (RAAEDEQDRKEETTG). Residues 296 to 308 (PQVNAPTSMQQGF) show a composition bias toward polar residues. Positions 398 to 565 (SRAPVVTIMG…AILLQSEILE (168 aa)) constitute a tr-type G domain. Residues 407-414 (GHVDHGKT) are G1. Position 407 to 414 (407 to 414 (GHVDHGKT)) interacts with GTP. The segment at 432–436 (GITQH) is G2. The tract at residues 453-456 (DTPG) is G3. Residues 453–457 (DTPGH) and 507–510 (NKID) each bind GTP. Residues 507-510 (NKID) are G4. A G5 region spans residues 543-545 (SAK).

It belongs to the TRAFAC class translation factor GTPase superfamily. Classic translation factor GTPase family. IF-2 subfamily.

The protein localises to the cytoplasm. Functionally, one of the essential components for the initiation of protein synthesis. Protects formylmethionyl-tRNA from spontaneous hydrolysis and promotes its binding to the 30S ribosomal subunits. Also involved in the hydrolysis of GTP during the formation of the 70S ribosomal complex. The protein is Translation initiation factor IF-2 of Photobacterium profundum (strain SS9).